Here is a 128-residue protein sequence, read N- to C-terminus: NADH-quinone oxidoreductase subunit A (128 aa).

Transmembrane regions (helical) follow at residues 9–29, 68–88, and 96–116; these read FPIA…LALA, LLFI…VLLL, and LGWA…AGLV.

This sequence belongs to the complex I subunit 3 family. In terms of assembly, NDH-1 is composed of 14 different subunits. Subunits NuoA, H, J, K, L, M, N constitute the membrane sector of the complex.

It localises to the cell inner membrane. The enzyme catalyses a quinone + NADH + 5 H(+)(in) = a quinol + NAD(+) + 4 H(+)(out). Functionally, NDH-1 shuttles electrons from NADH, via FMN and iron-sulfur (Fe-S) centers, to quinones in the respiratory chain. The immediate electron acceptor for the enzyme in this species is believed to be ubiquinone. Couples the redox reaction to proton translocation (for every two electrons transferred, four hydrogen ions are translocated across the cytoplasmic membrane), and thus conserves the redox energy in a proton gradient. The sequence is that of NADH-quinone oxidoreductase subunit A from Anaeromyxobacter sp. (strain Fw109-5).